Consider the following 316-residue polypeptide: D-alanine--D-alanine ligase (316 aa).

The ATP-grasp domain occupies 104–303; the sequence is KRVWLQHGLP…YADLCVAILA (200 aa). 130-185 contacts ATP; that stretch reads PDRLGLPLILKPPHEGSTVGITKVAGYSDMKAAYELAARFDAEVLAEQFITGRELT. The Mg(2+) site is built by aspartate 257, glutamate 270, and asparagine 272.

Belongs to the D-alanine--D-alanine ligase family. Mg(2+) serves as cofactor. The cofactor is Mn(2+).

The protein localises to the cytoplasm. The enzyme catalyses 2 D-alanine + ATP = D-alanyl-D-alanine + ADP + phosphate + H(+). It functions in the pathway cell wall biogenesis; peptidoglycan biosynthesis. Its function is as follows. Cell wall formation. In Bordetella bronchiseptica (strain ATCC BAA-588 / NCTC 13252 / RB50) (Alcaligenes bronchisepticus), this protein is D-alanine--D-alanine ligase.